A 484-amino-acid polypeptide reads, in one-letter code: Chromosomal replication initiator protein DnaA (484 aa).

Residues 1 to 73 are domain I, interacts with DnaA modulators; sequence MQEGKNIWSL…EILIEKGHNT (73 aa). Residues 73–140 are domain II; sequence TINVEFINSP…EEIHTKYRNP (68 aa). The segment at 141-357 is domain III, AAA+ region; the sequence is FLKKKYTFEN…AAVTKLKAHI (217 aa). ATP contacts are provided by glycine 185, glycine 187, lysine 188, and threonine 189. The segment at 358 to 484 is domain IV, binds dsDNA; it reads DLEDIEIDTS…IELMNKINKK (127 aa).

The protein belongs to the DnaA family. As to quaternary structure, oligomerizes as a right-handed, spiral filament on DNA at oriC.

The protein localises to the cytoplasm. In terms of biological role, plays an essential role in the initiation and regulation of chromosomal replication. ATP-DnaA binds to the origin of replication (oriC) to initiate formation of the DNA replication initiation complex once per cell cycle. Binds the DnaA box (a 9 base pair repeat at the origin) and separates the double-stranded (ds)DNA. Forms a right-handed helical filament on oriC DNA; dsDNA binds to the exterior of the filament while single-stranded (ss)DNA is stabiized in the filament's interior. The ATP-DnaA-oriC complex binds and stabilizes one strand of the AT-rich DNA unwinding element (DUE), permitting loading of DNA polymerase. After initiation quickly degrades to an ADP-DnaA complex that is not apt for DNA replication. Binds acidic phospholipids. The protein is Chromosomal replication initiator protein DnaA of Borrelia hermsii (strain HS1 / DAH).